The primary structure comprises 166 residues: Ribosome maturation factor RimM (166 aa).

One can recognise a PRC barrel domain in the interval 91–163 (DDGFYDHELE…TCVITPPEGL (73 aa)).

This sequence belongs to the RimM family. Binds ribosomal protein uS19.

It localises to the cytoplasm. In terms of biological role, an accessory protein needed during the final step in the assembly of 30S ribosomal subunit, possibly for assembly of the head region. Essential for efficient processing of 16S rRNA. May be needed both before and after RbfA during the maturation of 16S rRNA. It has affinity for free ribosomal 30S subunits but not for 70S ribosomes. The chain is Ribosome maturation factor RimM from Corynebacterium diphtheriae (strain ATCC 700971 / NCTC 13129 / Biotype gravis).